The chain runs to 554 residues: 3-(3-hydroxy-phenyl)propionate/3-hydroxycinnamic acid hydroxylase (554 aa).

FAD contacts are provided by residues 17-46 (QVAI…VVEK) and 285-295 (FRIDRVLLAGD).

This sequence belongs to the PheA/TfdB FAD monooxygenase family. FAD is required as a cofactor.

The catalysed reaction is 3-(3-hydroxyphenyl)propanoate + NADH + O2 + H(+) = 3-(2,3-dihydroxyphenyl)propanoate + NAD(+) + H2O. It catalyses the reaction (2E)-3-(3-hydroxyphenyl)prop-2-enoate + NADH + O2 + H(+) = (2E)-3-(2,3-dihydroxyphenyl)prop-2-enoate + NAD(+) + H2O. Its pathway is aromatic compound metabolism; 3-phenylpropanoate degradation. Functionally, catalyzes the insertion of one atom of molecular oxygen into position 2 of the phenyl ring of 3-(3-hydroxyphenyl)propionate (3-HPP) and hydroxycinnamic acid (3HCI). The sequence is that of 3-(3-hydroxy-phenyl)propionate/3-hydroxycinnamic acid hydroxylase from Escherichia coli (strain 55989 / EAEC).